The chain runs to 209 residues: Ribosomal RNA small subunit methyltransferase G (209 aa).

Residues G74, F79, and R139 each contribute to the S-adenosyl-L-methionine site.

This sequence belongs to the methyltransferase superfamily. RNA methyltransferase RsmG family.

It is found in the cytoplasm. It carries out the reaction guanosine(527) in 16S rRNA + S-adenosyl-L-methionine = N(7)-methylguanosine(527) in 16S rRNA + S-adenosyl-L-homocysteine. Functionally, specifically methylates the N7 position of guanine in position 527 of 16S rRNA. This Halorhodospira halophila (strain DSM 244 / SL1) (Ectothiorhodospira halophila (strain DSM 244 / SL1)) protein is Ribosomal RNA small subunit methyltransferase G.